The sequence spans 236 residues: E3 ubiquitin-protein ligase RNF187 (236 aa).

The RING-type zinc-finger motif lies at 12–53 (CALCQRAPREPVRADCGHRFCRACVVRFWAEEDGPFPCPECA). Asymmetric dimethylarginine; by PRMT1 occurs at positions 98 and 109. Residue Lys195 forms a Glycyl lysine isopeptide (Lys-Gly) (interchain with G-Cter in ubiquitin) linkage. Residue Ser200 is modified to Phosphoserine. Glycyl lysine isopeptide (Lys-Gly) (interchain with G-Cter in ubiquitin) cross-links involve residues Lys224 and Lys225.

In terms of assembly, homodimer. Interacts with JUN, independently of JUN phosphorylation. Interacts (via C-terminus) with TRIM7. Ubiquitinated; undergoes 'Lys-48'-linked autoubiquitination in the absence of growth factors and MAP3K1-induced 'Lys-63'-linked polyubiquitination. 'Lys-48'-autoubiquitination leads to degradation by the proteasome, while MAP3K1-induced 'Lys-63'-linked polyubiquitination results in the stabilization of the protein. 'Lys-48'- and 'Lys-63'-linked polyubiquitinations occur most probably on the same 3 C-terminal lysine residues (Lys-195, Lys-224 and Lys-225) and are thus mutually exclusive. Other sites of ubiquitination are not excluded. 'Lys-63'-linked polyubiquitination by TRIM7 in response to growth factor signaling via the MEK/ERK pathway enhances protein stability. Post-translationally, arginine methylation by PRMT1 stabilizes RNF187 by facilitating K63-linked ubiquitin chain formation, and enables dimerization, c-Jun interaction and subsequent AP1 target gene expression.

The protein localises to the cytoplasm. The protein resides in the nucleus. The enzyme catalyses S-ubiquitinyl-[E2 ubiquitin-conjugating enzyme]-L-cysteine + [acceptor protein]-L-lysine = [E2 ubiquitin-conjugating enzyme]-L-cysteine + N(6)-ubiquitinyl-[acceptor protein]-L-lysine.. The protein operates within protein modification; protein ubiquitination. In terms of biological role, E3 ubiquitin-protein ligase that acts as a coactivator of JUN-mediated gene activation in response to growth factor signaling via the MAP3K1 pathway, independently from MAPK8. In Mus musculus (Mouse), this protein is E3 ubiquitin-protein ligase RNF187 (Rnf187).